The following is a 436-amino-acid chain: Gamma-glutamyl phosphate reductase (436 aa).

It belongs to the gamma-glutamyl phosphate reductase family.

Its subcellular location is the cytoplasm. The enzyme catalyses L-glutamate 5-semialdehyde + phosphate + NADP(+) = L-glutamyl 5-phosphate + NADPH + H(+). It participates in amino-acid biosynthesis; L-proline biosynthesis; L-glutamate 5-semialdehyde from L-glutamate: step 2/2. Functionally, catalyzes the NADPH-dependent reduction of L-glutamate 5-phosphate into L-glutamate 5-semialdehyde and phosphate. The product spontaneously undergoes cyclization to form 1-pyrroline-5-carboxylate. This chain is Gamma-glutamyl phosphate reductase, found in Salinibacter ruber (strain DSM 13855 / M31).